The primary structure comprises 247 residues: Adenosylcobinamide-GDP ribazoletransferase (247 aa).

The next 5 helical transmembrane spans lie at 34–54 (IITF…VFMV), 59–79 (CGAP…TGGF), 113–133 (GGLA…ELAL), 138–158 (ILAS…LLMY), and 194–214 (VLLP…AIFI).

It belongs to the CobS family. It depends on Mg(2+) as a cofactor.

The protein localises to the cell inner membrane. It catalyses the reaction alpha-ribazole + adenosylcob(III)inamide-GDP = adenosylcob(III)alamin + GMP + H(+). It carries out the reaction alpha-ribazole 5'-phosphate + adenosylcob(III)inamide-GDP = adenosylcob(III)alamin 5'-phosphate + GMP + H(+). It functions in the pathway cofactor biosynthesis; adenosylcobalamin biosynthesis; adenosylcobalamin from cob(II)yrinate a,c-diamide: step 7/7. Functionally, joins adenosylcobinamide-GDP and alpha-ribazole to generate adenosylcobalamin (Ado-cobalamin). Also synthesizes adenosylcobalamin 5'-phosphate from adenosylcobinamide-GDP and alpha-ribazole 5'-phosphate. In Escherichia coli O157:H7, this protein is Adenosylcobinamide-GDP ribazoletransferase.